The chain runs to 144 residues: Large ribosomal subunit protein uL13 (144 aa).

Belongs to the universal ribosomal protein uL13 family. Part of the 50S ribosomal subunit.

Functionally, this protein is one of the early assembly proteins of the 50S ribosomal subunit, although it is not seen to bind rRNA by itself. It is important during the early stages of 50S assembly. The sequence is that of Large ribosomal subunit protein uL13 from Chloroflexus aurantiacus (strain ATCC 29366 / DSM 635 / J-10-fl).